Here is a 311-residue protein sequence, read N- to C-terminus: tRNA-cytidine(32) 2-sulfurtransferase (311 aa).

Residues 47 to 52 carry the PP-loop motif motif; sequence SGGKDS. The [4Fe-4S] cluster site is built by cysteine 122, cysteine 125, and cysteine 213.

Belongs to the TtcA family. In terms of assembly, homodimer. It depends on Mg(2+) as a cofactor. [4Fe-4S] cluster is required as a cofactor.

The protein localises to the cytoplasm. It catalyses the reaction cytidine(32) in tRNA + S-sulfanyl-L-cysteinyl-[cysteine desulfurase] + AH2 + ATP = 2-thiocytidine(32) in tRNA + L-cysteinyl-[cysteine desulfurase] + A + AMP + diphosphate + H(+). The protein operates within tRNA modification. In terms of biological role, catalyzes the ATP-dependent 2-thiolation of cytidine in position 32 of tRNA, to form 2-thiocytidine (s(2)C32). The sulfur atoms are provided by the cysteine/cysteine desulfurase (IscS) system. This Shigella flexneri serotype 5b (strain 8401) protein is tRNA-cytidine(32) 2-sulfurtransferase.